The primary structure comprises 150 residues: Large ribosomal subunit protein uL15 (150 aa).

The tract at residues 1 to 58 is disordered; the sequence is MNLSGIKPPKGQVKTKKRIGRGMGSGHGKTATRGSKGQHAGTGFSQKRGFEGGQMPLH.

This sequence belongs to the universal ribosomal protein uL15 family. As to quaternary structure, part of the 50S ribosomal subunit.

Its function is as follows. Binds to the 23S rRNA. In Solibacter usitatus (strain Ellin6076), this protein is Large ribosomal subunit protein uL15.